The sequence spans 365 residues: tRNA/tmRNA (uracil-C(5))-methyltransferase (365 aa).

Residues Q189, Y217, N222, E238, and D298 each contribute to the S-adenosyl-L-methionine site. The active-site Nucleophile is C323. E357 acts as the Proton acceptor in catalysis.

It belongs to the class I-like SAM-binding methyltransferase superfamily. RNA M5U methyltransferase family. TrmA subfamily.

It carries out the reaction uridine(54) in tRNA + S-adenosyl-L-methionine = 5-methyluridine(54) in tRNA + S-adenosyl-L-homocysteine + H(+). It catalyses the reaction uridine(341) in tmRNA + S-adenosyl-L-methionine = 5-methyluridine(341) in tmRNA + S-adenosyl-L-homocysteine + H(+). In terms of biological role, dual-specificity methyltransferase that catalyzes the formation of 5-methyluridine at position 54 (m5U54) in all tRNAs, and that of position 341 (m5U341) in tmRNA (transfer-mRNA). The protein is tRNA/tmRNA (uracil-C(5))-methyltransferase of Shewanella piezotolerans (strain WP3 / JCM 13877).